Reading from the N-terminus, the 302-residue chain is Glutamate/aspartate import solute-binding protein (302 aa).

Positions 1–22 are cleaved as a signal peptide; the sequence is MQLRKPATAILALALSAGLAQA.

Belongs to the bacterial solute-binding protein 3 family. In terms of assembly, the complex is composed of two ATP-binding proteins (GltL), two transmembrane proteins (GltJ and GltK) and a solute-binding protein (GltI).

The protein localises to the periplasm. Part of the ABC transporter complex GltIJKL involved in glutamate and aspartate uptake. Binds to both glutamate and aspartate. The polypeptide is Glutamate/aspartate import solute-binding protein (gltI) (Escherichia coli (strain K12)).